Consider the following 554-residue polypeptide: MSEAEARPTNFIRQIIDEDLASGKHTTVHTRFPPEPNGYLHIGHAKSICLNFGIAQDYKGQCNLRFDDTNPVKEDIEYVESIKNDVEWLGFHWSGNVRYSSDYFDQLHAYAIELINKGLAYVDELTPEQIREYRGTLTQPGKNSPYRDRSVEENLALFEKMRAGGFEEGKACLRAKIDMASPFIVMRDPVLYRIKFAEHHQTGNKWCIYPMYDFTHCISDALEGITHSLCTLEFQDNRRLYDWVLDNITIPVHPRQYEFSRLNLEYTVMSKRKLNLLVTDKHVEGWDDPRMPTISGLRRRGYTAASIREFCKRIGVTKQDNTIEMASLESCIREDLNENAPRAMAVIDPVKLVIENYQGEGEMVTMPNHPNKPEMGSRQVPFSGEIWIDRADFREEANKQYKRLVLGKEVRLRNAYVIKAERVEKDAEGNITTIFCTYDADTLSKDPADGRKVKGVIHWVSAAHALPVEIRLYDRLFSVPNPGAADDFLSVINPESLVIKQGFAEPSLKDAVAGKAFQFEREGYFCLDSRHSTAEKPVFNRTVGLRDTWAKVGE.

The 'HIGH' region motif lies at 34 to 44 (PEPNGYLHIGH). ATP is bound by residues 35-37 (EPN) and 41-47 (HIGHAKS). L-glutamine contacts are provided by Asp-67 and Tyr-212. Residues Thr-231, 261–262 (RL), and 269–271 (MSK) each bind ATP. The 'KMSKS' region signature appears at 268-272 (VMSKR). Residues 317 to 324 (TKQDNTIE) form an interaction with tRNA region.

The protein belongs to the class-I aminoacyl-tRNA synthetase family. In terms of assembly, monomer.

It localises to the cytoplasm. It carries out the reaction tRNA(Gln) + L-glutamine + ATP = L-glutaminyl-tRNA(Gln) + AMP + diphosphate. This is Glutamine--tRNA ligase from Escherichia coli (strain 55989 / EAEC).